A 294-amino-acid chain; its full sequence is 33 kDa chaperonin (294 aa).

2 disulfides stabilise this stretch: C238/C240 and C271/C274.

It belongs to the HSP33 family. Post-translationally, under oxidizing conditions two disulfide bonds are formed involving the reactive cysteines. Under reducing conditions zinc is bound to the reactive cysteines and the protein is inactive.

The protein resides in the cytoplasm. Functionally, redox regulated molecular chaperone. Protects both thermally unfolding and oxidatively damaged proteins from irreversible aggregation. Plays an important role in the bacterial defense system toward oxidative stress. This chain is 33 kDa chaperonin, found in Thermoanaerobacter pseudethanolicus (strain ATCC 33223 / 39E) (Clostridium thermohydrosulfuricum).